Consider the following 369-residue polypeptide: Anhydro-N-acetylmuramic acid kinase (369 aa).

12–19 (GTSLDGVD) is a binding site for ATP.

This sequence belongs to the anhydro-N-acetylmuramic acid kinase family.

The catalysed reaction is 1,6-anhydro-N-acetyl-beta-muramate + ATP + H2O = N-acetyl-D-muramate 6-phosphate + ADP + H(+). Its pathway is amino-sugar metabolism; 1,6-anhydro-N-acetylmuramate degradation. The protein operates within cell wall biogenesis; peptidoglycan recycling. In terms of biological role, catalyzes the specific phosphorylation of 1,6-anhydro-N-acetylmuramic acid (anhMurNAc) with the simultaneous cleavage of the 1,6-anhydro ring, generating MurNAc-6-P. Is required for the utilization of anhMurNAc either imported from the medium or derived from its own cell wall murein, and thus plays a role in cell wall recycling. In Actinobacillus pleuropneumoniae serotype 7 (strain AP76), this protein is Anhydro-N-acetylmuramic acid kinase.